A 332-amino-acid polypeptide reads, in one-letter code: Tryptophan--tRNA ligase (332 aa).

Residues Gln11–Ser13 and Gly19–Asn20 each bind ATP. The 'HIGH' region motif lies at Pro12–Asn20. Residue Asp135 coordinates L-tryptophan. ATP-binding positions include Gly147–Asp149, Val186, and Lys195–Ser199. Residues Lys195–Ser199 carry the 'KMSKS' region motif.

This sequence belongs to the class-I aminoacyl-tRNA synthetase family. In terms of assembly, homodimer.

It is found in the cytoplasm. It catalyses the reaction tRNA(Trp) + L-tryptophan + ATP = L-tryptophyl-tRNA(Trp) + AMP + diphosphate + H(+). Functionally, catalyzes the attachment of tryptophan to tRNA(Trp). The sequence is that of Tryptophan--tRNA ligase from Shewanella oneidensis (strain ATCC 700550 / JCM 31522 / CIP 106686 / LMG 19005 / NCIMB 14063 / MR-1).